The chain runs to 349 residues: ATP phosphoribosyltransferase regulatory subunit (349 aa).

The tract at residues 327–349 (GRGRGVRPRRASARGGRARARPR) is disordered. A compositionally biased stretch (basic residues) spans 330-349 (RGVRPRRASARGGRARARPR).

This sequence belongs to the class-II aminoacyl-tRNA synthetase family. HisZ subfamily. As to quaternary structure, heteromultimer composed of HisG and HisZ subunits.

It localises to the cytoplasm. Its pathway is amino-acid biosynthesis; L-histidine biosynthesis; L-histidine from 5-phospho-alpha-D-ribose 1-diphosphate: step 1/9. Functionally, required for the first step of histidine biosynthesis. May allow the feedback regulation of ATP phosphoribosyltransferase activity by histidine. The sequence is that of ATP phosphoribosyltransferase regulatory subunit from Anaeromyxobacter sp. (strain K).